We begin with the raw amino-acid sequence, 99 residues long: Large ribosomal subunit protein bL27 (99 aa).

The propeptide occupies 1–9; the sequence is MLLMNLQLF.

This sequence belongs to the bacterial ribosomal protein bL27 family. Post-translationally, the N-terminus is cleaved by ribosomal processing cysteine protease Prp.

The sequence is that of Large ribosomal subunit protein bL27 from Clostridium novyi (strain NT).